Consider the following 209-residue polypeptide: Probable phosphatase C1687.21 (209 aa).

His8 functions as the Tele-phosphohistidine intermediate in the catalytic mechanism. The Proton donor/acceptor role is filled by Glu82.

It belongs to the phosphoglycerate mutase family. BPG-dependent PGAM subfamily.

The protein resides in the cytoplasm. It localises to the nucleus. The polypeptide is Probable phosphatase C1687.21 (Schizosaccharomyces pombe (strain 972 / ATCC 24843) (Fission yeast)).